The chain runs to 110 residues: Protein ripply3 (110 aa).

A WRPW motif motif is present at residues 18 to 21; the sequence is WRPW. Positions 50-85 are ripply homology domain; the sequence is HPVRLFLPRSRMQEYLSRLGSSVLASFPVQATLHFY. Over residues 87–99 the composition is skewed to acidic residues; sequence DEDSSSEEEEDEE. A disordered region spans residues 87-110; it reads DEDSSSEEEEDEEHANTRCRLWRP.

This sequence belongs to the ripply family.

The protein localises to the nucleus. In terms of biological role, probable transcriptional regulator involved in developmental processes. In Danio rerio (Zebrafish), this protein is Protein ripply3 (ripply3).